Here is a 289-residue protein sequence, read N- to C-terminus: Mitochondrial fission regulator 1-like (289 aa).

Position 27 is a phosphothreonine (Thr-27). Phosphoserine occurs at positions 38, 100, 107, 221, 222, 235, 258, and 270.

Belongs to the MTFR1 family. Phosphorylated by AMPK. Upon stress, phosphorylation by AMPK is sufficient to induce mitochondrial fragmentation.

It localises to the mitochondrion outer membrane. Functionally, mitochondrial protein required for adaptation of miochondrial dynamics to metabolic changes. Regulates mitochondrial morphology at steady state and mediates AMPK-dependent stress-induced mitochondrial fragmentation via the control of OPA1 levels. This Bos taurus (Bovine) protein is Mitochondrial fission regulator 1-like (MTFR1L).